The following is a 324-amino-acid chain: Ribose 1,5-bisphosphate isomerase (324 aa).

Substrate-binding positions include 22–25 and R65; that span reads RGAG. The active-site Proton acceptor is the C135. Residue 137 to 139 participates in substrate binding; sequence SKA. Catalysis depends on D204, which acts as the Proton donor. Residue K240 participates in substrate binding.

Belongs to the eIF-2B alpha/beta/delta subunits family. R15P isomerase subfamily.

The catalysed reaction is alpha-D-ribose 1,5-bisphosphate = D-ribulose 1,5-bisphosphate. In terms of biological role, catalyzes the isomerization of ribose 1,5-bisphosphate (R15P) to ribulose 1,5-bisphosphate (RuBP), the CO(2) acceptor and substrate for RubisCO. Functions in an archaeal AMP degradation pathway, together with AMP phosphorylase and RubisCO. The sequence is that of Ribose 1,5-bisphosphate isomerase from Pyrococcus furiosus (strain ATCC 43587 / DSM 3638 / JCM 8422 / Vc1).